Reading from the N-terminus, the 951-residue chain is Thyroid hormone receptor-associated protein 3 (951 aa).

Residues 1–13 are compositionally biased toward low complexity; that stretch reads MSKTNKSKSGSRS. 3 disordered regions span residues 1 to 94, 117 to 558, and 661 to 951; these read MSKT…RGFY, AYSP…KSSF, and QEAA…PSAE. A compositionally biased stretch (basic residues) spans 14–51; that stretch reads SRSRSASRSRSRSFSKSRSRSRSVSRSRKRRLSSRSRS. Residues 58–75 show a composition bias toward basic and acidic residues; that stretch reads HNRERNHPRVYQNRDFRG. Residues 82-94 are compositionally biased toward low complexity; it reads RPYYFRGRNRGFY. Residues 121–143 show a composition bias toward basic residues; sequence RRGRSRSRSPKRRSPSPRSRSHS. Over residues 144-155 the composition is skewed to basic and acidic residues; that stretch reads RNSDKSSSDRSR. The segment covering 157–166 has biased composition (low complexity); it reads SSSSRLSSNH. Residues 167 to 188 are compositionally biased toward basic and acidic residues; it reads SRVESSKRKSTKEKKSSSKDSR. A compositionally biased stretch (polar residues) spans 204 to 220; it reads QTFSGGTSQDIKGSESS. Over residues 266–276 the composition is skewed to pro residues; it reads RPSPVPKPSPP. 2 stretches are compositionally biased toward low complexity: residues 305 to 322 and 337 to 346; these read GSGSLSPSKKSPVGKSPP and AASGGAAYSK. Composition is skewed to basic and acidic residues over residues 347-387, 411-449, 460-483, 490-518, and 537-547; these read RYLE…KMKS, LRDDFEKKMADFHKEELDEHDKDKSKGRKEPEFDDEPKF, NQEEEKSGKWESLHTGKEKQRKAE, FTERSRKEERGGSKRSESGHRGFVPEKNF, and KTSESRDKLGS. Residues 548–558 are compositionally biased toward low complexity; the sequence is KGDFSSGKSSF. 549–556 lines the ATP pocket; it reads GDFSSGKS. Composition is skewed to basic and acidic residues over residues 661 to 677 and 688 to 758; these read QEAAKNKKSPEIHRRID and LTHE…EKTH. Residues 759–772 are compositionally biased toward basic residues; the sequence is KGSKKQKKHRRARD. Composition is skewed to low complexity over residues 776–786 and 844–854; these read SSSSSSQSSHS and YSGNNNNNSNN. Basic and acidic residues predominate over residues 877–891; it reads YLHDDREGEGSDKWM. Residues 926-936 are compositionally biased toward acidic residues; sequence EEGEIEDDESG.

This sequence belongs to the BCLAF1/THRAP3 family. Associated with the large multiprotein complex TRAP (Mediator complex-like).

It localises to the nucleus. Its function is as follows. Involved in pre-mRNA splicing. Involved in nuclear mRNA decay. Initially thought to play a role in transcriptional coactivation through its association with the TRAP complex; however, it is not regarded as a stable Mediator complex subunit. May play a role in the positive regulation of the circadian clock. This chain is Thyroid hormone receptor-associated protein 3 (thrap3), found in Xenopus laevis (African clawed frog).